A 286-amino-acid chain; its full sequence is 5'-3' exonuclease (286 aa).

A 5'-3' exonuclease domain is found at 172–270; sequence IKPKEFIDFL…IKLKDIILKK (99 aa).

Functionally, 5'-3' exonuclease acting preferentially on double-stranded DNA. This chain is 5'-3' exonuclease, found in Buchnera aphidicola subsp. Acyrthosiphon pisum (strain APS) (Acyrthosiphon pisum symbiotic bacterium).